We begin with the raw amino-acid sequence, 547 residues long: Glucose-6-phosphate isomerase 1 (547 aa).

Glutamate 353 serves as the catalytic Proton donor. Catalysis depends on residues histidine 384 and lysine 512.

The protein belongs to the GPI family.

The protein localises to the cytoplasm. The enzyme catalyses alpha-D-glucose 6-phosphate = beta-D-fructose 6-phosphate. The protein operates within carbohydrate biosynthesis; gluconeogenesis. Its pathway is carbohydrate degradation; glycolysis; D-glyceraldehyde 3-phosphate and glycerone phosphate from D-glucose: step 2/4. Its function is as follows. Catalyzes the reversible isomerization of glucose-6-phosphate to fructose-6-phosphate. The polypeptide is Glucose-6-phosphate isomerase 1 (Chromobacterium violaceum (strain ATCC 12472 / DSM 30191 / JCM 1249 / CCUG 213 / NBRC 12614 / NCIMB 9131 / NCTC 9757 / MK)).